We begin with the raw amino-acid sequence, 281 residues long: Transmembrane protein 41A-A (281 aa).

An N-terminal signal peptide occupies residues 1 to 22 (MRSLVGLVAVIVTATFYLYSLS). The tract at residues 32-56 (HKQSHEGETTDAKDGDEPSEMETAS) is disordered. A compositionally biased stretch (basic and acidic residues) spans 34 to 47 (QSHEGETTDAKDGD). A run of 5 helical transmembrane segments spans residues 84–104 (GYVLLLFCSAYLYKQAFAIPG), 107–127 (FLNILAGALFGTWFGLLLTCV), 170–190 (LFFFLLFLRFFPMSPNWFLNM), 197–217 (IPVTLFFMAVFIGLMPYNFIC), and 236–256 (WSVVLKLLLTACVALLPGALI).

It belongs to the TMEM41 family.

The protein resides in the membrane. The protein is Transmembrane protein 41A-A (tmem41aa) of Danio rerio (Zebrafish).